A 184-amino-acid chain; its full sequence is Histone H3-like centromeric protein CSE4 (184 aa).

A disordered region spans residues 54-81; that stretch reads YIQPERSASSQQIHPPEHHISAHERITK. The span at 68-80 shows a compositional bias: basic and acidic residues; that stretch reads PPEHHISAHERIT. The H3-like stretch occupies residues 82–182; sequence ARGTRYKPTD…MQLARRIRGQ (101 aa).

The protein belongs to the histone H3 family. Component of centromeric nucleosomes, where DNA is wrapped around a histone octamer core. The octamer contains two molecules each of H2A, H2B, CSE4/CENPA and H4 assembled in one CSE4-H4 heterotetramer and two H2A-H2B heterodimers. Interacts with the inner kinetochore. Post-translationally, ubiquitinated. Is degraded through ubiquitin-mediated proteolysis when not protected by its association to the kinetochore.

The protein resides in the nucleus. It localises to the chromosome. Its subcellular location is the centromere. Functionally, histone H3-like nucleosomal protein that is specifically found in centromeric nucleosomes. Replaces conventional H3 in the nucleosome core of centromeric chromatin that serves as an assembly site for the inner kinetochore. Required for recruitment and assembly of kinetochore proteins, mitotic progression and chromosome segregation. May serve as an epigenetic mark that propagates centromere identity through replication and cell division. The chain is Histone H3-like centromeric protein CSE4 (CSE4) from Kluyveromyces lactis (strain ATCC 8585 / CBS 2359 / DSM 70799 / NBRC 1267 / NRRL Y-1140 / WM37) (Yeast).